The following is a 252-amino-acid chain: MGKNKLEKFADMASYPHVFEYPYSAVDNVPFDMKGKWHQEFFGNDHPIVLELGCGRGEYTVGLGRMFPDKNFIAVDIKGSRMWTGATESLQAGMKNVAFLRTNIEIIERFFAAGEVSEIWLTFSDPQMKKATKRLTSTYFMERYRKFLKPDGIIHLKTDSNFMFTYTKYMIEANQLPVEFITEDLYHSDLVDDILSIKTYYEQQWLDRGLNIKYIKFRLPQEGVLQEPDVEIELDPYRSYNRSKRSGLQTSK.

S-adenosyl-L-methionine contacts are provided by Glu-51, Asp-76, Asn-103, and Asp-125. Asp-125 is a catalytic residue. Substrate-binding positions include Lys-129, Asp-159, and Thr-199–Glu-202.

It belongs to the class I-like SAM-binding methyltransferase superfamily. TrmB family.

The catalysed reaction is guanosine(46) in tRNA + S-adenosyl-L-methionine = N(7)-methylguanosine(46) in tRNA + S-adenosyl-L-homocysteine. The protein operates within tRNA modification; N(7)-methylguanine-tRNA biosynthesis. Functionally, catalyzes the formation of N(7)-methylguanine at position 46 (m7G46) in tRNA. This chain is tRNA (guanine-N(7)-)-methyltransferase, found in Bacteroides thetaiotaomicron (strain ATCC 29148 / DSM 2079 / JCM 5827 / CCUG 10774 / NCTC 10582 / VPI-5482 / E50).